The following is a 347-amino-acid chain: NADH-quinone oxidoreductase subunit H 1 (347 aa).

9 helical membrane-spanning segments follow: residues 14 to 34 (IMIGQSLLLLVALLLFIAYVL), 50 to 70 (PNVVGPFGLFQSFADLLKFVF), 83 to 103 (IFLLAPLVSVTLALAAWAVIP), 115 to 135 (VGILFVFAISSLEVYGIIMGG), 161 to 181 (IGFVIVTVLLCVGSLNLTDIV), 198 to 218 (FLDWHWLSLFPMFIIFFISAL), 258 to 278 (AICLMCALTTILFLGGWLPPV), 286 to 306 (VPGIIWFVLKASLVFFMFAMV), and 321 to 341 (LGWKVFLPLSLAMVVIVAFVL).

This sequence belongs to the complex I subunit 1 family. NDH-1 is composed of 14 different subunits. Subunits NuoA, H, J, K, L, M, N constitute the membrane sector of the complex.

It is found in the cell inner membrane. It carries out the reaction a quinone + NADH + 5 H(+)(in) = a quinol + NAD(+) + 4 H(+)(out). In terms of biological role, NDH-1 shuttles electrons from NADH, via FMN and iron-sulfur (Fe-S) centers, to quinones in the respiratory chain. The immediate electron acceptor for the enzyme in this species is believed to be ubiquinone. Couples the redox reaction to proton translocation (for every two electrons transferred, four hydrogen ions are translocated across the cytoplasmic membrane), and thus conserves the redox energy in a proton gradient. This subunit may bind ubiquinone. The protein is NADH-quinone oxidoreductase subunit H 1 of Rhizobium meliloti (strain 1021) (Ensifer meliloti).